A 306-amino-acid chain; its full sequence is UDP-N-acetylenolpyruvoylglucosamine reductase (306 aa).

Residues 25–188 enclose the FAD-binding PCMH-type domain; that stretch reads RVGGPADWLF…IEARFRAEPG (164 aa). Residue R168 is part of the active site. Basic and acidic residues predominate over residues 199–214; sequence EQLARRDASQPTKDRS. The tract at residues 199–232 is disordered; it reads EQLARRDASQPTKDRSAGSTFRNPAGYSSTGRAD. Residues 215 to 229 are compositionally biased toward polar residues; that stretch reads AGSTFRNPAGYSSTG. The Proton donor role is filled by S217. The active site involves E299.

This sequence belongs to the MurB family. It depends on FAD as a cofactor.

The protein localises to the cytoplasm. The enzyme catalyses UDP-N-acetyl-alpha-D-muramate + NADP(+) = UDP-N-acetyl-3-O-(1-carboxyvinyl)-alpha-D-glucosamine + NADPH + H(+). Its pathway is cell wall biogenesis; peptidoglycan biosynthesis. Its function is as follows. Cell wall formation. In Paracoccus denitrificans (strain Pd 1222), this protein is UDP-N-acetylenolpyruvoylglucosamine reductase.